Consider the following 346-residue polypeptide: Patr class I histocompatibility antigen, CH28 alpha chain (346 aa).

Positions 1–21 are cleaved as a signal peptide; that stretch reads MAPRSLLLLFSGALALTETWA. The interval 22–111 is alpha-1; it reads GSHSLRYFST…LLRRYNQSEA (90 aa). Residues 22–305 lie on the Extracellular side of the membrane; the sequence is GSHSLRYFST…EQSPQPTIPI (284 aa). Residue Asn107 is glycosylated (N-linked (GlcNAc...) asparagine). The alpha-2 stretch occupies residues 112–203; it reads GSHTLQGMNG…ENGKETLQRA (92 aa). Disulfide bonds link Cys122–Cys185 and Cys224–Cys280. The interval 204–295 is alpha-3; the sequence is DPPKAHIAHH…GLPQPLTLRW (92 aa). Residues 206–294 enclose the Ig-like C1-type domain; sequence PKAHIAHHPI…EGLPQPLTLR (89 aa). A connecting peptide region spans residues 296–305; it reads EQSPQPTIPI. A helical membrane pass occupies residues 306–329; it reads VGIVAGLVVLGAVVTGAVVAAVMW. At 330–346 the chain is on the cytoplasmic side; sequence RKKSSDRNRGSYSQAAV.

Belongs to the MHC class I family. As to quaternary structure, heterodimer of an alpha chain and a beta chain (beta-2-microglobulin).

Its subcellular location is the membrane. In terms of biological role, involved in the presentation of foreign antigens to the immune system. The sequence is that of Patr class I histocompatibility antigen, CH28 alpha chain from Pan troglodytes (Chimpanzee).